A 378-amino-acid polypeptide reads, in one-letter code: Deoxyguanosinetriphosphate triphosphohydrolase-like protein (378 aa).

The region spanning 62-198 is the HD domain; that stretch reads RLTHTIEVAQ…AAVADDVAYN (137 aa).

It belongs to the dGTPase family. Type 2 subfamily.

The protein is Deoxyguanosinetriphosphate triphosphohydrolase-like protein of Paracoccus denitrificans (strain Pd 1222).